The primary structure comprises 66 residues: Photosystem II reaction center protein H (66 aa).

A helical transmembrane segment spans residues 27-47; sequence GAVPVMTVIGLLLLVFLVILL.

It belongs to the PsbH family. PSII is composed of 1 copy each of membrane proteins PsbA, PsbB, PsbC, PsbD, PsbE, PsbF, PsbH, PsbI, PsbJ, PsbK, PsbL, PsbM, PsbT, PsbX, PsbY, Psb30/Ycf12, peripheral proteins PsbO, CyanoQ (PsbQ), PsbU, PsbV and a large number of cofactors. It forms dimeric complexes.

The protein localises to the cellular thylakoid membrane. Functionally, one of the components of the core complex of photosystem II (PSII), required for its stability and/or assembly. PSII is a light-driven water:plastoquinone oxidoreductase that uses light energy to abstract electrons from H(2)O, generating O(2) and a proton gradient subsequently used for ATP formation. It consists of a core antenna complex that captures photons, and an electron transfer chain that converts photonic excitation into a charge separation. The protein is Photosystem II reaction center protein H of Prochlorococcus marinus (strain MIT 9215).